The following is a 27-amino-acid chain: Urumin (27 aa).

As to expression, expressed by the skin glands.

The protein resides in the secreted. Functionally, amphibian peptide that shows viricidal activity against human H1N1 influenza A virus. It specifically targets the conserved stalk region of H1 hemagglutinin, and acts by actively destroying influenza virions. It shows a reduced activity on human H3N2 influenza A virus and no activity against other viruses (HIV, SIV, HSV-II, hepatitis C, Ebola, Zika, and Dengue viruses). In vivo, the peptide also protects mice infected with mouse-adapted influenza virus from lethal influenza infection. The peptide synthesized in D-amino acids is inactive. The sequence is that of Urumin from Hydrophylax bahuvistara (Wide-spread fungoid frog).